A 424-amino-acid chain; its full sequence is Tyrosine--tRNA ligase (424 aa).

Residue Tyr36 coordinates L-tyrosine. The short motif at 41–50 is the 'HIGH' region element; sequence PTAPSLHAGH. Residues Tyr171 and Gln175 each coordinate L-tyrosine. The 'KMSKS' region signature appears at 231-235; sequence KFGKS. Lys234 lines the ATP pocket. The region spanning 356-413 is the S4 RNA-binding domain; the sequence is DGIVDLLVASGLSASKGAARRTIHEGGVSVNNIRVDNEEWVPQSSDFLHGRWLVLRRG.

This sequence belongs to the class-I aminoacyl-tRNA synthetase family. TyrS type 1 subfamily. In terms of assembly, homodimer.

It is found in the cytoplasm. The enzyme catalyses tRNA(Tyr) + L-tyrosine + ATP = L-tyrosyl-tRNA(Tyr) + AMP + diphosphate + H(+). In terms of biological role, catalyzes the attachment of tyrosine to tRNA(Tyr) in a two-step reaction: tyrosine is first activated by ATP to form Tyr-AMP and then transferred to the acceptor end of tRNA(Tyr). The protein is Tyrosine--tRNA ligase of Mycobacterium bovis (strain ATCC BAA-935 / AF2122/97).